The primary structure comprises 523 residues: Signal peptide peptidase-like 3 (523 aa).

Positions 1–35 are cleaved as a signal peptide; that stretch reads MAFPAPSSSSPRRRGRGLAYLLVSVLLLASRVPGA. Residues 36-207 lie on the Lumenal side of the membrane; it reads AGADSEFEDG…EKPSFDGAIP (172 aa). Residues 110 to 182 form the PA domain; sequence SAPLASSIAV…SQSAGRKILS (73 aa). N-linked (GlcNAc...) asparagine glycosylation is present at N159. Residues 208–228 traverse the membrane as a helical segment; that stretch reads FLWLMAVGSVACASVWSFVVV. Topologically, residues 229–254 are cytoplasmic; it reads GDEDKNAPTLGGEEAADSEIVELQTK. A helical membrane pass occupies residues 255 to 272; sequence TALVFIVTASLVLLFLFF. Residues 273–275 lie on the Lumenal side of the membrane; that stretch reads FKS. Residues 276–298 form a helical membrane-spanning segment; that stretch reads TWSAWLLVVLFCLSGLQGLHYVA. At 299 to 321 the chain is on the cytoplasmic side; the sequence is STLIVRTCDRCREAKVALPVLGN. Residues 322-342 traverse the membrane as a helical segment; the sequence is VTVVTLVILPLALIFVVVWAV. The Lumenal portion of the chain corresponds to 343–347; that stretch reads HQNSP. Residues 348–368 traverse the membrane as a helical segment; the sequence is FAWVGQDLMGICMMILVLQVV. Topologically, residues 369–377 are cytoplasmic; the sequence is HLPNIKVAT. A helical membrane pass occupies residues 378–398; the sequence is ALLVSAFMYDIFWVFISPFIF. D387 is a catalytic residue. Residues 399–430 are Lumenal-facing; sequence KKSVMITVARGSDEGPSLPMVLKMPKEFDTWN. Residues 431-451 form a helical membrane-spanning segment; it reads GYDMIGFGDILFPGLLVAFSF. D439 is an active-site residue. Residues 452-465 lie on the Cytoplasmic side of the membrane; it reads RYDRANGKDLTDGY. A helical transmembrane segment spans residues 466-486; that stretch reads FLCLMIGYAFGLSCTYVGLYL. At 487–489 the chain is on the lumenal side; it reads MKS. The chain crosses the membrane as a helical span at residues 490-510; it reads GQPALLYLVPSTLGTIVTLGA. The short motif at 492-494 is the PAL element; that stretch reads PAL. At 511–523 the chain is on the cytoplasmic side; it reads KRGELSQLWNAKV.

This sequence belongs to the peptidase A22B family. In terms of processing, glycosylated.

The protein localises to the endosome membrane. Functionally, intramembrane-cleaving aspartic protease (I-CLiP) that cleaves type II membrane signal peptides in the hydrophobic plane of the membrane. In Oryza sativa subsp. japonica (Rice), this protein is Signal peptide peptidase-like 3 (SPPL3).